Consider the following 22-residue polypeptide: Conotoxin MIIIJ (22 aa).

Q1 carries the pyrrolidone carboxylic acid modification. 3 cysteine pairs are disulfide-bonded: C3/C21, C4/C19, and C9/C22.

It belongs to the conotoxin M superfamily. As to expression, expressed by the venom duct.

The protein resides in the secreted. Probable competitive antagonist of fish muscle acetylcholine receptor. Inhibits postsynaptic nicotinic acetylcholine receptors (nAChRs) from fish (zebrafish and goldfish) and frogs (IC(50)=0.1 uM). Protects these receptors from block by alpha-bungarotoxin and alpha-conotoxin EI. Does not block nAChRs at the neuromuscular junction of Rana pipiens. Shows a weak inhibition on mammalian adult and fetal muscle nAChRs (alpha-1-beta-1-delta-epsilon/CHRNA1-CHRNB1-CHRND-CHRNE and alpha-1 beta-1 gamma delta/CHRNA1-CHRNB1-CHRNG-CHRND) (IC(50)=3-45 uM). In vivo, induces paralysis in goldfish (Carassius auratus) but not mice. The chain is Conotoxin MIIIJ from Conus magus (Magical cone).